The following is a 275-amino-acid chain: Anthracycline biosynthesis protein DnrV (275 aa).

VOC domains are found at residues 8 to 136 (APAW…VWRK) and 150 to 263 (SVGW…VVEL).

It participates in antibiotic biosynthesis; daunorubicin biosynthesis. The protein operates within antibiotic biosynthesis; carminomycin biosynthesis. In terms of biological role, involved in the biosynthesis of the anthracyclines carminomycin and daunorubicin (daunomycin) which are aromatic polyketide antibiotics that exhibit high cytotoxicity and are widely applied in the chemotherapy of a variety of cancers. In vivo, it acts jointly with DoxA in the conversion of 13-deoxycarminomycin and 13-deoxydaunorubicin to yield carminomycin and daunorubicin, respectively. In vitro, it also acts jointly with DoxA in the C-14 hydroxylation of daunorubicin to form doxorubicin, although this strain is not a doxorubicin producer. In Streptomyces peucetius, this protein is Anthracycline biosynthesis protein DnrV (dnrV).